Consider the following 321-residue polypeptide: UDP-3-O-acylglucosamine N-acyltransferase (321 aa).

The active-site Proton acceptor is histidine 231.

Belongs to the transferase hexapeptide repeat family. LpxD subfamily. As to quaternary structure, homotrimer.

It catalyses the reaction a UDP-3-O-[(3R)-3-hydroxyacyl]-alpha-D-glucosamine + a (3R)-hydroxyacyl-[ACP] = a UDP-2-N,3-O-bis[(3R)-3-hydroxyacyl]-alpha-D-glucosamine + holo-[ACP] + H(+). It functions in the pathway bacterial outer membrane biogenesis; LPS lipid A biosynthesis. In terms of biological role, catalyzes the N-acylation of UDP-3-O-acylglucosamine using 3-hydroxyacyl-ACP as the acyl donor. Is involved in the biosynthesis of lipid A, a phosphorylated glycolipid that anchors the lipopolysaccharide to the outer membrane of the cell. The protein is UDP-3-O-acylglucosamine N-acyltransferase of Campylobacter jejuni subsp. jejuni serotype O:2 (strain ATCC 700819 / NCTC 11168).